A 544-amino-acid polypeptide reads, in one-letter code: Intercellular adhesion molecule 3 (544 aa).

The signal sequence occupies residues 1–31 (MIASGPPPRVYWTSLIFLLLACCLLPTGAQG). The Extracellular segment spans residues 32 to 486 (QTYQVRVEPK…MMDVQGRNPV (455 aa)). The region spanning 48–105 (GEPLVVNCTLDCPGPGLISLETALSKEPHSRGLGWAAFRLTNVTGDMEILCSGICNKS) is the Ig-like C2-type 1 domain. Residues N54, N89, N103, N112, N138, N190, N209, N243, N267, N296, N321, and N326 are each glycosylated (N-linked (GlcNAc...) asparagine). Disulfide bonds link C55/C98 and C59/C102. Residues 134-200 (GEELNLSCLV…FSCRSELDLR (67 aa)) form the Ig-like C2-type 2 domain. C141 and C193 are disulfide-bonded. Residues 237 to 302 (ETSWPVNCSL…IVCNVTLGVE (66 aa)) form the Ig-like C2-type 3 domain. A disulfide bond links C244 and C295. An Ig-like C2-type 4 domain is found at 330 to 383 (GTPVTVTCAAGPQVQVMLDGVPAAVPGQPAQLQLKATEMDDRRTFFCNATLKVH). A disulfide bridge connects residues C337 and C376. Residues N377, N390, and N456 are each glycosylated (N-linked (GlcNAc...) asparagine). Residues 417-470 (KTMHILQCQARGNPNPQLQCLREGSKFKVPVGIPFLVLLNYSGTYSCQAASSRG) enclose the Ig-like C2-type 5 domain. A disulfide bridge links C424 with C463. The helical transmembrane segment at 487–511 (TINIVLGVLAILGLVTLAAASVYVF) threads the bilayer. Topologically, residues 512–544 (WVQRQHDIYHLTPRSTRWRLTSTQPVTVAEELS) are cytoplasmic.

Belongs to the immunoglobulin superfamily. ICAM family. As to quaternary structure, interacts with moesin/MSN. As to expression, leukocytes.

Its subcellular location is the membrane. ICAM proteins are ligands for the leukocyte adhesion protein LFA-1 (integrin alpha-L/beta-2). ICAM3 is also a ligand for integrin alpha-D/beta-2. In association with integrin alpha-L/beta-2, contributes to apoptotic neutrophil phagocytosis by macrophages. This chain is Intercellular adhesion molecule 3 (ICAM3), found in Bos taurus (Bovine).